Consider the following 332-residue polypeptide: ATP-dependent (S)-NAD(P)H-hydrate dehydratase (332 aa).

The YjeF C-terminal domain occupies 46–326; sequence LLERARNIVP…EQIHNVFDDI (281 aa). (6S)-NADPHX contacts are provided by residues Gly-146 and 199-205; that span reads NAIEFCR. ATP is bound by residues 230–234 and 251–260; these read KGLND and GSGRRCGGQG. Asp-261 is a (6S)-NADPHX binding site.

The protein belongs to the NnrD/CARKD family. It depends on Mg(2+) as a cofactor.

It catalyses the reaction (6S)-NADHX + ATP = ADP + phosphate + NADH + H(+). The catalysed reaction is (6S)-NADPHX + ATP = ADP + phosphate + NADPH + H(+). Catalyzes the dehydration of the S-form of NAD(P)HX at the expense of ATP, which is converted to ADP. Together with NAD(P)HX epimerase, which catalyzes the epimerization of the S- and R-forms, the enzyme allows the repair of both epimers of NAD(P)HX, a damaged form of NAD(P)H that is a result of enzymatic or heat-dependent hydration. The polypeptide is ATP-dependent (S)-NAD(P)H-hydrate dehydratase (Aedes aegypti (Yellowfever mosquito)).